A 91-amino-acid chain; its full sequence is Acylphosphatase (91 aa).

The 89-residue stretch at 3 to 91 folds into the Acylphosphatase-like domain; it reads CLRAIVKGKV…ANYSDFRIKH (89 aa). Catalysis depends on residues arginine 18 and asparagine 36.

It belongs to the acylphosphatase family.

It carries out the reaction an acyl phosphate + H2O = a carboxylate + phosphate + H(+). In Dehalococcoides mccartyi (strain ATCC BAA-2100 / JCM 16839 / KCTC 5957 / BAV1), this protein is Acylphosphatase (acyP).